A 501-amino-acid chain; its full sequence is Melianol synthase CYP71BQ5 (501 aa).

A helical membrane pass occupies residues 1–21 (MEFRLPVLLSFLLFFLMLVRH). Cysteine 439 contacts heme.

This sequence belongs to the cytochrome P450 family. Requires heme as cofactor. In terms of tissue distribution, mainly expressed in petioles and roots, and, to a lower extent, in leaves.

The protein localises to the membrane. The enzyme catalyses dihydroniloticin + 2 reduced [NADPH--hemoprotein reductase] + 2 O2 = melianol + 2 oxidized [NADPH--hemoprotein reductase] + 3 H2O + 2 H(+). The protein operates within secondary metabolite biosynthesis; terpenoid biosynthesis. Its function is as follows. Monooxygenase involved in the biosynthesis of limonoids triterpene natural products such as azadirachtin, an antifeedant widely used as bioinsecticide, and possessing many medicinal applications including anti-tumoral, anti-malarial, anti-rheumatic, antibacterial, anti-inflammatory, anti-pyretic and diuretic effects. Catalyzes the conversion of dihydroniloticin to the protolimonoid melianol. The protein is Melianol synthase CYP71BQ5 of Melia azedarach (Chinaberry tree).